The following is a 472-amino-acid chain: Divalent metal cation transporter MntH (472 aa).

The next 11 membrane-spanning stretches (helical) occupy residues 59 to 79 (LLAF…PGNW), 92 to 112 (MLLS…ALAA), 136 to 156 (LALW…EVIG), 167 to 187 (VPII…LLLM), 196 to 216 (AFVI…IVLA), 233 to 253 (VVAD…TVMP), 288 to 308 (LALM…AAVF), 325 to 345 (LLAP…ALLA), 377 to 397 (VLTR…YGEQ), 402 to 422 (LLLL…IPLL), and 439 to 459 (WLMV…VKLL).

Belongs to the NRAMP family.

The protein resides in the cell inner membrane. Functionally, h(+)-stimulated, divalent metal cation uptake system. This Xylella fastidiosa (strain 9a5c) protein is Divalent metal cation transporter MntH.